The following is a 268-amino-acid chain: Undecaprenyl-diphosphatase (268 aa).

The next 7 membrane-spanning stretches (helical) occupy residues 5 to 25 (SIIS…IPVS), 43 to 63 (GNTF…LVYF), 84 to 104 (FSVL…HGFI), 106 to 126 (AVLF…GVIL), 184 to 204 (AAEF…TLDL), 213 to 233 (FDDI…GIVV), and 248 to 268 (PFAI…WLVG).

It belongs to the UppP family.

The protein resides in the cell inner membrane. The enzyme catalyses di-trans,octa-cis-undecaprenyl diphosphate + H2O = di-trans,octa-cis-undecaprenyl phosphate + phosphate + H(+). Its function is as follows. Catalyzes the dephosphorylation of undecaprenyl diphosphate (UPP). Confers resistance to bacitracin. This is Undecaprenyl-diphosphatase from Sinorhizobium fredii (strain NBRC 101917 / NGR234).